A 144-amino-acid polypeptide reads, in one-letter code: MKSYLAKENEVQRKWYVIDVEGKPLGRAASQVATILRGKNKPTYTPNVDTGDYVIILNAEKVALTGKKLDQKMLRHHSLYPGGLKEISYKKALESKPEFVFQEAVRRMLPQGPLGRKMLKKLKVYRGSEHNQEAQKPEVLELRY.

This sequence belongs to the universal ribosomal protein uL13 family. As to quaternary structure, part of the 50S ribosomal subunit.

Its function is as follows. This protein is one of the early assembly proteins of the 50S ribosomal subunit, although it is not seen to bind rRNA by itself. It is important during the early stages of 50S assembly. The polypeptide is Large ribosomal subunit protein uL13 (Clostridium novyi (strain NT)).